A 391-amino-acid chain; its full sequence is Zinc finger protein 414 (391 aa).

The tract at residues 1 to 110 is disordered; it reads MDEEPSGPSL…RRPPPGKQIP (110 aa). Polar residues predominate over residues 84-93; it reads GPTSTVSGTS. C2H2-type zinc fingers lie at residues 109 to 133, 145 to 169, and 176 to 201; these read IPCS…LRTH, FRCS…GKLH, and FKCE…CAEH. Disordered regions lie at residues 201 to 243, 274 to 312, and 344 to 391; these read HAQS…LEPF, LAAA…SGHA, and HLED…FSPL. Positions 214–226 are enriched in basic and acidic residues; that stretch reads LDRESPASERPPE. A compositionally biased stretch (pro residues) spans 227–236; that stretch reads SDPAPAPGLP. Residues 274 to 286 are compositionally biased toward low complexity; the sequence is LAAAPGPPASSAA. The C2H2-type 4 zinc finger occupies 326–348; that stretch reads YSCMQCAFSTASRPAMTLHLEDH. Residues 353-372 show a composition bias toward pro residues; it reads PAAPAPGQPRPDAPADPAPL.

This sequence belongs to the krueppel C2H2-type zinc-finger protein family.

The protein localises to the nucleus. Functionally, may be involved in transcriptional regulation. The chain is Zinc finger protein 414 (ZNF414) from Bos taurus (Bovine).